A 1115-amino-acid chain; its full sequence is Eukaryotic translation initiation factor 2-alpha kinase 3 (1115 aa).

The signal sequence occupies residues 1-29 (MERATGPGSLARTLLLPLLLGLVAGTVTA). Topologically, residues 30-514 (RRTSDLLAPT…PNYKNIRKKD (485 aa)) are extracellular. The tract at residues 74 to 101 (SEALPAAAGEQEAREPEPEPEEEPDIRP) is disordered. An N-linked (GlcNAc...) asparagine glycan is attached at Asn-259. The helical transmembrane segment at 515–535 (PVLLLHWWKEIVGTIVFCIVA) threads the bilayer. Topologically, residues 536–1115 (TTFIVRRLFH…SSPHSPLPSN (580 aa)) are cytoplasmic. The Protein kinase domain occupies 593 to 1076 (FEPIQCMGRG…AASIIENAIF (484 aa)). 599–607 (MGRGGFGVV) contacts ATP. Tyr-619 carries the post-translational modification Phosphotyrosine; by autocatalysis. Lys-622 is a binding site for ATP. Residues 647-887 (EHPGIVRYFN…SPKVYLYIQM (241 aa)) form an insert loop region. Phosphoserine is present on Ser-715. Thr-802 carries the post-translational modification Phosphothreonine. 2 disordered regions span residues 807 to 832 (VFED…VGNH) and 841 to 860 (RHSG…SRPT). The segment covering 845-860 (SKSSEPTVSVSPSRPT) has biased composition (polar residues). Asp-936 serves as the catalytic Proton acceptor. Residue Thr-981 is modified to Phosphothreonine. The interval 1087–1115 (LRQRSRSMSSPGAKHSRHSSSPHSPLPSN) is disordered. Position 1093 is a phosphoserine (Ser-1093).

It belongs to the protein kinase superfamily. Ser/Thr protein kinase family. GCN2 subfamily. Forms dimers with HSPA5/BIP in resting cells. Homotetramerizes in response to endoplasmic reticulum (ER) stress, leading to its activation. Interacts with HSP90B1/GRP94. Interacts with DNAJC3; inhibiting EIF2AK3/PERK activity. Interacts with ATAD3A; ATAD3A and EIF2S1/eIF-2-alpha occupy a common binding site within the cytoplasmic loop of EIF2AK3/PERK, leading to prevent EIF2AK3/PERK association with its substrate EIF2S1/eIF-2-alpha. Interacts with MFN2. Interacts with TMEM33. Interacts with PDIA6. Interacts with LACC1. In terms of processing, oligomerization of the N-terminal ER luminal domain by ER stress promotes EIF2AK3/PERK trans-autophosphorylation of the C-terminal cytoplasmic kinase domain at multiple residues including Thr-981 on the kinase activation loop. Autophosphorylated at Tyr-619 following endoplasmic reticulum stress, leading to activate its activity. Dephosphorylated at Tyr-619 by PTPN1/PTP1B, leading to inactivate its enzyme activity. Phosphorylation at Thr-802 by AKT (AKT1, AKT2 and/or AKT3) inactivates EIF2AK3/PERK. ADP-ribosylated by PARP16 upon ER stress, which increases kinase activity.

The protein resides in the endoplasmic reticulum membrane. The enzyme catalyses L-seryl-[protein] + ATP = O-phospho-L-seryl-[protein] + ADP + H(+). It catalyses the reaction L-threonyl-[protein] + ATP = O-phospho-L-threonyl-[protein] + ADP + H(+). It carries out the reaction L-tyrosyl-[protein] + ATP = O-phospho-L-tyrosyl-[protein] + ADP + H(+). Its activity is regulated as follows. Inhibited by HSPA5/BIP in absence of stress. Perturbation in protein folding in the endoplasmic reticulum (ER) promotes reversible dissociation from HSPA5/BIP and oligomerization, resulting in trans-autophosphorylation and kinase activity induction. Inactivated following phosphorylation at Thr-802 by AKT (AKT1, AKT2 and/or AKT3). Inhibited by ATAD3A at mitochondria-endoplasmic reticulum contact sites, providing a safe haven for mitochondrial protein translation during ER stress. Functionally, metabolic-stress sensing protein kinase that phosphorylates the alpha subunit of eukaryotic translation initiation factor 2 (EIF2S1/eIF-2-alpha) in response to various stress, such as unfolded protein response (UPR). Key effector of the integrated stress response (ISR) to unfolded proteins: EIF2AK3/PERK specifically recognizes and binds misfolded proteins, leading to its activation and EIF2S1/eIF-2-alpha phosphorylation. EIF2S1/eIF-2-alpha phosphorylation in response to stress converts EIF2S1/eIF-2-alpha in a global protein synthesis inhibitor, leading to a global attenuation of cap-dependent translation, while concomitantly initiating the preferential translation of ISR-specific mRNAs, such as the transcriptional activators ATF4 and QRICH1, and hence allowing ATF4- and QRICH1-mediated reprogramming. The EIF2AK3/PERK-mediated unfolded protein response increases mitochondrial oxidative phosphorylation by promoting ATF4-mediated expression of COX7A2L/SCAF1, thereby increasing formation of respiratory chain supercomplexes. In contrast to most subcellular compartments, mitochondria are protected from the EIF2AK3/PERK-mediated unfolded protein response due to EIF2AK3/PERK inhibition by ATAD3A at mitochondria-endoplasmic reticulum contact sites. In addition to EIF2S1/eIF-2-alpha, also phosphorylates NFE2L2/NRF2 in response to stress, promoting release of NFE2L2/NRF2 from the BCR(KEAP1) complex, leading to nuclear accumulation and activation of NFE2L2/NRF2. Serves as a critical effector of unfolded protein response (UPR)-induced G1 growth arrest due to the loss of cyclin-D1 (CCND1). Involved in control of mitochondrial morphology and function. The polypeptide is Eukaryotic translation initiation factor 2-alpha kinase 3 (Bos taurus (Bovine)).